Consider the following 194-residue polypeptide: Protein GrpE (194 aa).

Over residues 1–14 the composition is skewed to polar residues; that stretch reads MENTQENPTSQNPT. The interval 1–50 is disordered; sequence MENTQENPTSQNPTPADETARQAAEAAAPQQEAAANAATDSPVNAEQSAL. The span at 21–38 shows a compositional bias: low complexity; sequence RQAAEAAAPQQEAAANAA.

It belongs to the GrpE family. In terms of assembly, homodimer.

The protein resides in the cytoplasm. Participates actively in the response to hyperosmotic and heat shock by preventing the aggregation of stress-denatured proteins, in association with DnaK and GrpE. It is the nucleotide exchange factor for DnaK and may function as a thermosensor. Unfolded proteins bind initially to DnaJ; upon interaction with the DnaJ-bound protein, DnaK hydrolyzes its bound ATP, resulting in the formation of a stable complex. GrpE releases ADP from DnaK; ATP binding to DnaK triggers the release of the substrate protein, thus completing the reaction cycle. Several rounds of ATP-dependent interactions between DnaJ, DnaK and GrpE are required for fully efficient folding. This is Protein GrpE from Paraburkholderia phytofirmans (strain DSM 17436 / LMG 22146 / PsJN) (Burkholderia phytofirmans).